Here is a 356-residue protein sequence, read N- to C-terminus: Holliday junction branch migration complex subunit RuvB (356 aa).

The large ATPase domain (RuvB-L) stretch occupies residues 13–201 (SSNLSRKTRL…FGITQRLNFY (189 aa)). A disordered region spans residues 15–35 (NLSRKTRLLDPTPSLEEGKVR). ATP is bound by residues L40, R41, G82, K85, T86, T87, 148–150 (EDF), R191, Y201, and R238. Residue T86 coordinates Mg(2+). Residues 202 to 273 (SISDLNRIIQ…LVDKSLTLHQ (72 aa)) form a small ATPAse domain (RuvB-S) region. The tract at residues 276 to 356 (ECGLDQSDRR…NSCKNSPIIK (81 aa)) is head domain (RuvB-H). Positions 331 and 336 each coordinate DNA.

This sequence belongs to the RuvB family. As to quaternary structure, homohexamer. Forms an RuvA(8)-RuvB(12)-Holliday junction (HJ) complex. HJ DNA is sandwiched between 2 RuvA tetramers; dsDNA enters through RuvA and exits via RuvB. An RuvB hexamer assembles on each DNA strand where it exits the tetramer. Each RuvB hexamer is contacted by two RuvA subunits (via domain III) on 2 adjacent RuvB subunits; this complex drives branch migration. In the full resolvosome a probable DNA-RuvA(4)-RuvB(12)-RuvC(2) complex forms which resolves the HJ.

Its subcellular location is the cytoplasm. It catalyses the reaction ATP + H2O = ADP + phosphate + H(+). Its function is as follows. The RuvA-RuvB-RuvC complex processes Holliday junction (HJ) DNA during genetic recombination and DNA repair, while the RuvA-RuvB complex plays an important role in the rescue of blocked DNA replication forks via replication fork reversal (RFR). RuvA specifically binds to HJ cruciform DNA, conferring on it an open structure. The RuvB hexamer acts as an ATP-dependent pump, pulling dsDNA into and through the RuvAB complex. RuvB forms 2 homohexamers on either side of HJ DNA bound by 1 or 2 RuvA tetramers; 4 subunits per hexamer contact DNA at a time. Coordinated motions by a converter formed by DNA-disengaged RuvB subunits stimulates ATP hydrolysis and nucleotide exchange. Immobilization of the converter enables RuvB to convert the ATP-contained energy into a lever motion, pulling 2 nucleotides of DNA out of the RuvA tetramer per ATP hydrolyzed, thus driving DNA branch migration. The RuvB motors rotate together with the DNA substrate, which together with the progressing nucleotide cycle form the mechanistic basis for DNA recombination by continuous HJ branch migration. Branch migration allows RuvC to scan DNA until it finds its consensus sequence, where it cleaves and resolves cruciform DNA. This Prochlorococcus marinus (strain SARG / CCMP1375 / SS120) protein is Holliday junction branch migration complex subunit RuvB.